A 556-amino-acid chain; its full sequence is 2-succinyl-5-enolpyruvyl-6-hydroxy-3-cyclohexene-1-carboxylate synthase (556 aa).

This sequence belongs to the TPP enzyme family. MenD subfamily. In terms of assembly, homodimer. Mg(2+) is required as a cofactor. It depends on Mn(2+) as a cofactor. The cofactor is thiamine diphosphate.

The catalysed reaction is isochorismate + 2-oxoglutarate + H(+) = 5-enolpyruvoyl-6-hydroxy-2-succinyl-cyclohex-3-ene-1-carboxylate + CO2. It functions in the pathway quinol/quinone metabolism; 1,4-dihydroxy-2-naphthoate biosynthesis; 1,4-dihydroxy-2-naphthoate from chorismate: step 2/7. Its pathway is quinol/quinone metabolism; menaquinone biosynthesis. Functionally, catalyzes the thiamine diphosphate-dependent decarboxylation of 2-oxoglutarate and the subsequent addition of the resulting succinic semialdehyde-thiamine pyrophosphate anion to isochorismate to yield 2-succinyl-5-enolpyruvyl-6-hydroxy-3-cyclohexene-1-carboxylate (SEPHCHC). The protein is 2-succinyl-5-enolpyruvyl-6-hydroxy-3-cyclohexene-1-carboxylate synthase of Shigella sonnei (strain Ss046).